The following is a 505-amino-acid chain: Prenylcysteine oxidase 1 (505 aa).

An N-terminal signal peptide occupies residues 1 to 27 (MGRVVAELVSSLLGLWLLLCSCGCPEG). N-linked (GlcNAc...) asparagine glycans are attached at residues Asn-196, Asn-323, and Asn-353.

It belongs to the prenylcysteine oxidase family. Requires FAD as cofactor.

It localises to the lysosome. The catalysed reaction is an S-polyprenyl-L-cysteine + O2 + H2O = a polyprenal + L-cysteine + H2O2. It carries out the reaction S-(2E,6E)-farnesyl-L-cysteine + O2 + H2O = (2E,6E)-farnesal + L-cysteine + H2O2. The enzyme catalyses [(2E,6E,10E)-geranylgeranyl]-L-cysteine + O2 + H2O = (2E,6E,10E)-geranylgeranial + L-cysteine + H2O2. In terms of biological role, prenylcysteine oxidase that cleaves the thioether bond of prenyl-L-cysteines, such as farnesylcysteine and geranylgeranylcysteine. Only active against free prenylcysteines and not prenylcysteine residues within prenylated proteins or peptides. Involved in the final step in the degradation of prenylated proteins, by degrading prenylcysteines after the protein has been degraded. In Pongo abelii (Sumatran orangutan), this protein is Prenylcysteine oxidase 1.